The chain runs to 208 residues: Guanylate kinase (208 aa).

Residues 8 to 187 (GVCLVISAPS…AISQARSVLT (180 aa)) enclose the Guanylate kinase-like domain. 15–22 (APSGAGKS) contacts ATP.

It belongs to the guanylate kinase family.

Its subcellular location is the cytoplasm. It catalyses the reaction GMP + ATP = GDP + ADP. Functionally, essential for recycling GMP and indirectly, cGMP. In Gluconobacter oxydans (strain 621H) (Gluconobacter suboxydans), this protein is Guanylate kinase.